Consider the following 325-residue polypeptide: ATP phosphoribosyltransferase (325 aa).

It belongs to the ATP phosphoribosyltransferase family. Long subfamily. It depends on Mg(2+) as a cofactor.

Its subcellular location is the cytoplasm. The enzyme catalyses 1-(5-phospho-beta-D-ribosyl)-ATP + diphosphate = 5-phospho-alpha-D-ribose 1-diphosphate + ATP. It participates in amino-acid biosynthesis; L-histidine biosynthesis; L-histidine from 5-phospho-alpha-D-ribose 1-diphosphate: step 1/9. With respect to regulation, feedback inhibited by histidine. Catalyzes the condensation of ATP and 5-phosphoribose 1-diphosphate to form N'-(5'-phosphoribosyl)-ATP (PR-ATP). Has a crucial role in the pathway because the rate of histidine biosynthesis seems to be controlled primarily by regulation of HisG enzymatic activity. The protein is ATP phosphoribosyltransferase of Bradyrhizobium diazoefficiens (strain JCM 10833 / BCRC 13528 / IAM 13628 / NBRC 14792 / USDA 110).